Consider the following 1587-residue polypeptide: MTDKPGSAEDTIEMDDTCSPQFVQEVNRIKSQIKSLVEENHTRKFFRPLTSNIGDETAILRIQFNNMMSKMEEKEKQSLVKELIKMVHHVAEKNSPDRVFVGTNYERVVDQLLRYAHQKGAISTNLCAEGLIMTSDFRLCSRICQEKWKFINDCIPKIDYKGIRNILRYILESQLRRLPYSLSPEQVNEIRIVENVILHIVDRDSNLMPPLITLSEIMRGMPKQALMLPRLTEKLASLSVHFRPIADLSHVCGRGFVYPIPLHPSFYPLTSCWEEHGLNASNTIVQPHHTLPYRPEHTSTYLYTLYMILRQPLGKDSLHPPSKTKTKTNWEMLISVMICESMAEAESLPETEPIPRYQWDNIVNIVIYGITQHLLVPKTFFNVLKNLIKRCKYTRARDEVMWIVFQVVGSLSNLTRLDDAVTEIVELYNELFDGDVVWMGASDHPALFARFLAAAGTWMILEKDFADKMPPANETIKSHIKFIQDGVDNFDSSNTAMLAVLSNIYRTDTKMGKLIVPTLQQMLESIDDTKSLFELSYKRMAVNCFSAFPVEFMEALTFRSKKTLLIQCFQPLRSFSTVRLPSPAVFETVAKICESEDYEMAVKDMEHLAQRSLHVATAADRSSGEHQNVQAKDQCYFLFDFLVYRLPHLHAYSKYSSTVNALSYFTQHIPNNPQNHQIYRLMEQFLMRRWCWAGFHGCITAHTQMFGTSYKDNTMMRHMAYPKTFSVPDQYPFAINPEIFKMAIYSFLRAVKITAQDIAIEKTMFPTIINGFGWPEKSTSYFPKWALDAIKASDTSNAVNTEEILSDVRNTARMHTSLTPNQFVIRYGEDRDPATSHCMLAVLFHFAYNSVDSTYNITSEFYEVMEKKTPKEIVVMGNYLVDYIIADAKTQDCNEKTFKNIAKAAALLVFQFQVLRADRLLLSLIMHPATDEDALICIQIANEFILTPEFQERIRWYHQNVPKKDHFPTEYIKAIVKYHDAFPEFEACELVRSYDSSSNVHMPTYYGCLIERLLPIMDQYLHVALEQQGYKLNPQILQSVSMLYKFHAMPIHFMYSVLFTSHGLMSGPDAKSFVLAFATQIEECHLTEAFEKFNHQKSSREQLIMELIDRMSASLDFILTPPPFVAKDWKIAELSPGAQTLYLACIELMASPHSPETLVAAMINVMQMKPHARPFNIVNLTALLLTALPAAYSNALHDEFVAVFVNGETANLKFEEIVFDNYEESLLLNLPNRARTINVISQQYWLHCSLSLLNFFSHEYVPRILEHVKTEKDLWYTLRLVMPYLRRYYENWDTAKQMRSQRENFGPLHIVKLVFQKLGSMAEEGVEIVYEQHLCDLFYNCKYFFAGDFLRNTAITEFAKLPEKMRDRLKFYVSQSEPTAEQETPPEKEKSPEKEKEQEQEQHVKAHQPLESTPSVSSLPQMQHHLQQAPLLPSHQMMPPPQQHSSSLQHHLQHHTSTHQMMDTSQHQTIQQQSNHPTQQQLQHQIPNMSMHQQMGPQYPGAVFHHPSGPVGHVPMQYGMGHHMQQHPHLPHHQQMPAPMHTMNPMMQNMTPQQQYLYMQQLQQHQQHQQYMQQQQQHHHQHQQQPH.

Disordered stretches follow at residues 1374–1484 and 1567–1587; these read SQSE…QLQH and QHQQ…QQPH. Residues 1385–1404 are compositionally biased toward basic and acidic residues; it reads PPEKEKSPEKEKEQEQEQHV. The acidic stretch occupies residues 1387-1404; that stretch reads EKEKSPEKEKEQEQEQHV. The span at 1410–1426 shows a compositional bias: polar residues; the sequence is LESTPSVSSLPQMQHHL. Residues 1430–1450 are compositionally biased toward low complexity; sequence PLLPSHQMMPPPQQHSSSLQH. Positions 1463–1484 are enriched in polar residues; the sequence is DTSQHQTIQQQSNHPTQQQLQH. Positions 1567-1576 are enriched in low complexity; it reads QHQQYMQQQQ. Basic residues predominate over residues 1577–1587; that stretch reads QHHHQHQQQPH.

The protein belongs to the Mediator complex subunit 23 family. Component of the Mediator complex. Interacts with let-19/mdt-13.

It localises to the nucleus. In terms of biological role, component of the Mediator complex, a coactivator involved in regulated gene transcription of nearly all RNA polymerase II-dependent genes. Mediator functions as a bridge to convey information from gene-specific regulatory proteins to the basal RNA polymerase II transcription machinery. Mediator is recruited to promoters by direct interactions with regulatory proteins and serves as a scaffold for the assembly of a functional pre-initiation complex with RNA polymerase II and the general transcription factors. Functions downstream of receptor let-23 and let-60/Ras during vulval induction likely by down-regulating the expression of phosphatase dep-1 and lin-12/Notch in vulva precursor cell descendants with a primary cell fate. Acts to repress beta-catenin target genes. Required for asymmetric division of T-cells. Plays a role in responses to M.nematophilum-mediated bacterial infection by promoting tail swelling and preventing constipation. This Caenorhabditis elegans protein is Mediator of RNA polymerase II transcription subunit 23 (sur-2).